The chain runs to 300 residues: D-alanine--D-alanine ligase (300 aa).

In terms of domain architecture, ATP-grasp spans 99–293 (KKILKYANIN…FAELLNSIVK (195 aa)). 126–181 (IEKIGYPVFVKPNSGGSSVATNLVKDKEGIKEAVELALKYDKEVMIENYTKGEEIT) serves as a coordination point for ATP. Mg(2+) is bound by residues Asp-248, Glu-260, and Asn-262.

It belongs to the D-alanine--D-alanine ligase family. Requires Mg(2+) as cofactor. Mn(2+) is required as a cofactor.

The protein resides in the cytoplasm. The enzyme catalyses 2 D-alanine + ATP = D-alanyl-D-alanine + ADP + phosphate + H(+). Its pathway is cell wall biogenesis; peptidoglycan biosynthesis. Cell wall formation. The sequence is that of D-alanine--D-alanine ligase from Clostridium botulinum (strain Langeland / NCTC 10281 / Type F).